Here is a 195-residue protein sequence, read N- to C-terminus: MPYGTRYPTLAFHTGGVGESDDGMPPQPFETFCYDSALLQAKIENFNIVPYTSVLPKELFGNILPVDQCTKFFKHGAVLEVIMAGKGAAVAEGTQAIATGVGICWGKDKNGDLIGGWAAEYVEFFPTWIDDEIAESHAKMWLKKSLQHELDLRSVSKHSEFQYFHNYINIKKKFGFCLTALGFLNFENADPVVIQ.

Ser53 carries the pyruvic acid (Ser) modification.

Belongs to the pyruvoyl-dependent arginine decarboxylase family. In terms of assembly, trimer of an alpha-beta dimer. Requires pyruvate as cofactor.

It localises to the cytoplasm. The enzyme catalyses L-arginine + H(+) = agmatine + CO2. Its function is as follows. Part of the AaxABC system, catalyzes the decarboxylation of L-arginine. The arginine uptake by the bacterium in the macrophage may be a virulence factor against the host innate immune response. The protein is Pyruvoyl-dependent arginine decarboxylase AaxB (aaxB) of Chlamydia muridarum (strain MoPn / Nigg).